Here is a 126-residue protein sequence, read N- to C-terminus: Glycine cleavage system H protein (126 aa).

In terms of domain architecture, Lipoyl-binding spans 23–104; sequence KVRVGITDFA…YDEGWMIEII (82 aa). Residue K64 is modified to N6-lipoyllysine.

Belongs to the GcvH family. As to quaternary structure, the glycine cleavage system is composed of four proteins: P, T, L and H. (R)-lipoate serves as cofactor.

Its function is as follows. The glycine cleavage system catalyzes the degradation of glycine. The H protein shuttles the methylamine group of glycine from the P protein to the T protein. The protein is Glycine cleavage system H protein of Chlorobium phaeobacteroides (strain BS1).